Reading from the N-terminus, the 396-residue chain is 1-deoxy-D-xylulose 5-phosphate reductoisomerase (396 aa).

NADPH contacts are provided by T10, G11, S12, I13, and N123. K124 contacts 1-deoxy-D-xylulose 5-phosphate. Residue E125 coordinates NADPH. D149 lines the Mn(2+) pocket. The 1-deoxy-D-xylulose 5-phosphate site is built by S150, E151, S185, and H208. Mn(2+) is bound at residue E151. G214 provides a ligand contact to NADPH. 4 residues coordinate 1-deoxy-D-xylulose 5-phosphate: S221, N226, K227, and E230. E230 lines the Mn(2+) pocket.

This sequence belongs to the DXR family. The cofactor is Mg(2+). Mn(2+) is required as a cofactor.

The enzyme catalyses 2-C-methyl-D-erythritol 4-phosphate + NADP(+) = 1-deoxy-D-xylulose 5-phosphate + NADPH + H(+). Its pathway is isoprenoid biosynthesis; isopentenyl diphosphate biosynthesis via DXP pathway; isopentenyl diphosphate from 1-deoxy-D-xylulose 5-phosphate: step 1/6. In terms of biological role, catalyzes the NADPH-dependent rearrangement and reduction of 1-deoxy-D-xylulose-5-phosphate (DXP) to 2-C-methyl-D-erythritol 4-phosphate (MEP). This is 1-deoxy-D-xylulose 5-phosphate reductoisomerase from Shewanella sp. (strain MR-7).